A 557-amino-acid chain; its full sequence is Dihydroxy-acid dehydratase (557 aa).

A [2Fe-2S] cluster-binding site is contributed by Cys-50. Residue Asp-82 coordinates Mg(2+). Position 123 (Cys-123) interacts with [2Fe-2S] cluster. Positions 124 and 125 each coordinate Mg(2+). Residue Lys-125 is modified to N6-carboxylysine. Cys-195 lines the [2Fe-2S] cluster pocket. Glu-447 contributes to the Mg(2+) binding site. Ser-473 (proton acceptor) is an active-site residue.

It belongs to the IlvD/Edd family. Homodimer. Requires [2Fe-2S] cluster as cofactor. Mg(2+) serves as cofactor.

It catalyses the reaction (2R)-2,3-dihydroxy-3-methylbutanoate = 3-methyl-2-oxobutanoate + H2O. The catalysed reaction is (2R,3R)-2,3-dihydroxy-3-methylpentanoate = (S)-3-methyl-2-oxopentanoate + H2O. The protein operates within amino-acid biosynthesis; L-isoleucine biosynthesis; L-isoleucine from 2-oxobutanoate: step 3/4. It participates in amino-acid biosynthesis; L-valine biosynthesis; L-valine from pyruvate: step 3/4. Its function is as follows. Functions in the biosynthesis of branched-chain amino acids. Catalyzes the dehydration of (2R,3R)-2,3-dihydroxy-3-methylpentanoate (2,3-dihydroxy-3-methylvalerate) into 2-oxo-3-methylpentanoate (2-oxo-3-methylvalerate) and of (2R)-2,3-dihydroxy-3-methylbutanoate (2,3-dihydroxyisovalerate) into 2-oxo-3-methylbutanoate (2-oxoisovalerate), the penultimate precursor to L-isoleucine and L-valine, respectively. The sequence is that of Dihydroxy-acid dehydratase from Nitrosomonas europaea (strain ATCC 19718 / CIP 103999 / KCTC 2705 / NBRC 14298).